The following is a 321-amino-acid chain: tRNA(Ile)-lysidine synthase (321 aa).

30-35 (SGGSDS) lines the ATP pocket.

The protein belongs to the tRNA(Ile)-lysidine synthase family.

It is found in the cytoplasm. The enzyme catalyses cytidine(34) in tRNA(Ile2) + L-lysine + ATP = lysidine(34) in tRNA(Ile2) + AMP + diphosphate + H(+). Functionally, ligates lysine onto the cytidine present at position 34 of the AUA codon-specific tRNA(Ile) that contains the anticodon CAU, in an ATP-dependent manner. Cytidine is converted to lysidine, thus changing the amino acid specificity of the tRNA from methionine to isoleucine. The polypeptide is tRNA(Ile)-lysidine synthase (Chlamydia muridarum (strain MoPn / Nigg)).